The primary structure comprises 392 residues: Meiotically up-regulated gene 11 protein (392 aa).

The protein localises to the cytoplasm. It localises to the nucleus. Functionally, has a role in meiosis. The polypeptide is Meiotically up-regulated gene 11 protein (mug11) (Schizosaccharomyces pombe (strain 972 / ATCC 24843) (Fission yeast)).